A 444-amino-acid chain; its full sequence is D(2) dopamine receptor (444 aa).

Residues 1–37 (MDPLNLSWYDDDLERQNWSRPFNGSEGKPDRPHYNYY) are Extracellular-facing. Residues N5, N17, and N23 are each glycosylated (N-linked (GlcNAc...) asparagine). A helical membrane pass occupies residues 38–60 (AMLLTLLIFIIVFGNVLVCMAVS). Residues 61–70 (REKALQTTTN) lie on the Cytoplasmic side of the membrane. Residues 71-93 (YLIVSLAVADLLVATLVMPWVVY) traverse the membrane as a helical segment. At 94–108 (LEVVGEWKFSRIHCD) the chain is on the extracellular side. Cysteines 107 and 182 form a disulfide. A helical transmembrane segment spans residues 109-130 (IFVTLDVMMCTASILNLCAISI). Over 131–151 (DRYTAVAMPMLYNTRYSSKRR) the chain is Cytoplasmic. Residues 152–172 (VTVMIAIVWVLSFTISCPLLF) traverse the membrane as a helical segment. Residues 173-188 (GLNNTDQNECIIANPA) lie on the Extracellular side of the membrane. The helical transmembrane segment at 189 to 213 (FVVYSSIVSFYVPFIVTLLVYIKIY) threads the bilayer. The segment at 211-374 (KIYIVLRKRR…SQQKEKKATQ (164 aa)) is interaction with PPP1R9B. Residues 214–374 (IVLRKRRKRV…SQQKEKKATQ (161 aa)) are Cytoplasmic-facing. Positions 282–329 (EMLSSTSPPERTRYSPIPPSHHQLTLPDPSHHGLHSNPDSPAKPEKNG) are disordered. A helical transmembrane segment spans residues 375 to 396 (MLAIVLGVFIICWLPFFITHIL). The Extracellular portion of the chain corresponds to 397-410 (NIHCDCNIPPVLYS). Cysteines 400 and 402 form a disulfide. Residues 411–432 (AFTWLGYVNSAVNPIIYTTFNI) traverse the membrane as a helical segment. Residues 433-444 (EFRKAFMKILHC) lie on the Cytoplasmic side of the membrane. The S-palmitoyl cysteine moiety is linked to residue C444.

Belongs to the G-protein coupled receptor 1 family. In terms of assembly, forms homo- and heterooligomers with DRD4. The interaction with DRD4 may modulate agonist-induced downstream signaling. Interacts with CADPS and CADPS2. Interacts with GPRASP1, PPP1R9B and CLIC6. Interacts with ARRB2. Interacts with HTR2A. Interacts with DRD1. Interacts with KCNA2. Post-translationally, palmitoylated. Palmitoylation which is required for proper localization to the plasma membrane and stability of the receptor could be carried on by ZDHHC4, ZDHHC3 and ZDHHC8. As to expression, expressed in retinal hyaloid vessels at postnatal day 6. Expressed in the pituitary gland, stratum, brain stem and cortex. In terms of tissue distribution, expressed in the brain stem.

Its subcellular location is the cell membrane. The protein localises to the golgi apparatus membrane. Functionally, dopamine receptor whose activity is mediated by G proteins which inhibit adenylyl cyclase. Positively regulates postnatal regression of retinal hyaloid vessels via suppression of VEGFR2/KDR activity, downstream of OPN5. The chain is D(2) dopamine receptor (Drd2) from Mus musculus (Mouse).